The primary structure comprises 149 residues: Large ribosomal subunit protein bL9 (149 aa).

This sequence belongs to the bacterial ribosomal protein bL9 family.

Binds to the 23S rRNA. This is Large ribosomal subunit protein bL9 from Haemophilus influenzae (strain PittGG).